We begin with the raw amino-acid sequence, 193 residues long: Ion-translocating oxidoreductase complex subunit A (193 aa).

A run of 6 helical transmembrane segments spans residues 5–25 (LLLF…FLGL), 47–67 (FVMT…LIPL), 72–92 (LRTL…EMVV), 102–122 (LLGI…VALL), 134–154 (ALYG…FAAI), and 171–191 (AIAL…SGLV).

It belongs to the NqrDE/RnfAE family. As to quaternary structure, the complex is composed of six subunits: RsxA, RsxB, RsxC, RsxD, RsxE and RsxG.

The protein resides in the cell inner membrane. Its function is as follows. Part of a membrane-bound complex that couples electron transfer with translocation of ions across the membrane. Required to maintain the reduced state of SoxR. The polypeptide is Ion-translocating oxidoreductase complex subunit A (Salmonella arizonae (strain ATCC BAA-731 / CDC346-86 / RSK2980)).